Consider the following 194-residue polypeptide: Rho-related protein racC (194 aa).

GTP contacts are provided by Ala-17, Gly-19, Lys-20, Thr-21, Cys-22, Glu-34, Tyr-36, Thr-39, Gly-64, Lys-120, Asp-122, Ala-163, and Lys-164. Thr-21 contacts Mg(2+). Short sequence motifs (switch) lie at residues 30-41 (RKFPEDYIPTVF) and 61-79 (DTAG…YSSA). Thr-39 lines the Mg(2+) pocket. Cys-191 is modified (cysteine methyl ester). The S-geranylgeranyl cysteine moiety is linked to residue Cys-191. The propeptide at 192–194 (ALL) is removed in mature form.

Belongs to the small GTPase superfamily. Rho family. In terms of assembly, interacts (GTP-bound form) with PAK4 (via CRIB domain). Interacts (GTP-bound form) with PAK5 (via CRIB domain). The cofactor is Mg(2+).

Its subcellular location is the cell membrane. The protein localises to the cytoplasm. It is found in the cytoskeleton. The catalysed reaction is GTP + H2O = GDP + phosphate + H(+). Regulated by guanine nucleotide exchange factors (GEFs) which promote the exchange of bound GDP for free GTP, GTPase activating proteins (GAPs) which increase the GTP hydrolysis activity, and GDP dissociation inhibitors which inhibit the dissociation of the nucleotide from the GTPase. Functionally, small GTPase which cycles between active GTP-bound and inactive GDP-bound states. In Entamoeba histolytica (strain ATCC 30459 / HM-1:IMSS / ABRM), this protein is Rho-related protein racC.